The primary structure comprises 304 residues: Protease HtpX homolog 1 (304 aa).

The next 2 helical transmembrane spans lie at 17 to 37 (VTLF…IALL) and 39 to 59 (SWVL…WFSD). Histidine 140 serves as a coordination point for Zn(2+). Residue glutamate 141 is part of the active site. Zn(2+) is bound at residue histidine 144. Helical transmembrane passes span 151 to 171 (AVIT…RFAF) and 186 to 206 (AVLA…FLLI). Glutamate 214 is a binding site for Zn(2+).

The protein belongs to the peptidase M48B family. Requires Zn(2+) as cofactor.

The protein localises to the cell membrane. In Streptomyces coelicolor (strain ATCC BAA-471 / A3(2) / M145), this protein is Protease HtpX homolog 1.